We begin with the raw amino-acid sequence, 323 residues long: DNA-directed RNA polymerase subunit alpha (323 aa).

The interval methionine 1–asparagine 225 is alpha N-terminal domain (alpha-NTD). The segment at isoleucine 246 to glycine 323 is alpha C-terminal domain (alpha-CTD).

The protein belongs to the RNA polymerase alpha chain family. In terms of assembly, homodimer. The RNAP catalytic core consists of 2 alpha, 1 beta, 1 beta' and 1 omega subunit. When a sigma factor is associated with the core the holoenzyme is formed, which can initiate transcription.

It carries out the reaction RNA(n) + a ribonucleoside 5'-triphosphate = RNA(n+1) + diphosphate. DNA-dependent RNA polymerase catalyzes the transcription of DNA into RNA using the four ribonucleoside triphosphates as substrates. This chain is DNA-directed RNA polymerase subunit alpha, found in Roseiflexus sp. (strain RS-1).